Reading from the N-terminus, the 98-residue chain is Homeobox protein SMOX-4 (98 aa).

The homeobox DNA-binding region spans serine 37–asparagine 96.

The protein resides in the nucleus. This chain is Homeobox protein SMOX-4 (SMOX-4), found in Schistosoma mansoni (Blood fluke).